The primary structure comprises 316 residues: Probable 5-dehydro-4-deoxyglucarate dehydratase (316 aa).

This sequence belongs to the DapA family.

It carries out the reaction 5-dehydro-4-deoxy-D-glucarate + H(+) = 2,5-dioxopentanoate + CO2 + H2O. It participates in carbohydrate acid metabolism; D-glucarate degradation; 2,5-dioxopentanoate from D-glucarate: step 2/2. This chain is Probable 5-dehydro-4-deoxyglucarate dehydratase, found in Corynebacterium glutamicum (strain R).